The chain runs to 181 residues: Oligoribonuclease (181 aa).

The region spanning 8–171 is the Exonuclease domain; that stretch reads LIWVDLEMTG…VDIQESIAEL (164 aa). Tyrosine 129 is an active-site residue.

This sequence belongs to the oligoribonuclease family.

It is found in the cytoplasm. Functionally, 3'-to-5' exoribonuclease specific for small oligoribonucleotides. The protein is Oligoribonuclease of Shewanella loihica (strain ATCC BAA-1088 / PV-4).